We begin with the raw amino-acid sequence, 201 residues long: Holliday junction branch migration complex subunit RuvA (201 aa).

The segment at 1–63 (MIGCLIGEVF…EDAQQLYGFI (63 aa)) is domain I. The tract at residues 64 to 142 (DAQEKLIFRT…ALSVQATTGS (79 aa)) is domain II. A flexible linker region spans residues 143-152 (TVTSAQIQFS). The segment at 152–201 (SSNSPIAEAEAALQSLGYKPIEAQKAIAAVKADYTEAADLIRAALKSMMK) is domain III.

This sequence belongs to the RuvA family. Homotetramer. Forms an RuvA(8)-RuvB(12)-Holliday junction (HJ) complex. HJ DNA is sandwiched between 2 RuvA tetramers; dsDNA enters through RuvA and exits via RuvB. An RuvB hexamer assembles on each DNA strand where it exits the tetramer. Each RuvB hexamer is contacted by two RuvA subunits (via domain III) on 2 adjacent RuvB subunits; this complex drives branch migration. In the full resolvosome a probable DNA-RuvA(4)-RuvB(12)-RuvC(2) complex forms which resolves the HJ.

It is found in the cytoplasm. Its function is as follows. The RuvA-RuvB-RuvC complex processes Holliday junction (HJ) DNA during genetic recombination and DNA repair, while the RuvA-RuvB complex plays an important role in the rescue of blocked DNA replication forks via replication fork reversal (RFR). RuvA specifically binds to HJ cruciform DNA, conferring on it an open structure. The RuvB hexamer acts as an ATP-dependent pump, pulling dsDNA into and through the RuvAB complex. HJ branch migration allows RuvC to scan DNA until it finds its consensus sequence, where it cleaves and resolves the cruciform DNA. This is Holliday junction branch migration complex subunit RuvA from Acinetobacter baylyi (strain ATCC 33305 / BD413 / ADP1).